Here is a 303-residue protein sequence, read N- to C-terminus: Quinolinate synthase (303 aa).

Residues His-24 and Ser-41 each contribute to the iminosuccinate site. Position 86 (Cys-86) interacts with [4Fe-4S] cluster. Iminosuccinate-binding positions include Tyr-112–Asn-114 and Ser-129. Cys-172 is a [4Fe-4S] cluster binding site. Residues His-198–Glu-200 and Thr-215 contribute to the iminosuccinate site. Cys-260 contributes to the [4Fe-4S] cluster binding site.

It belongs to the quinolinate synthase family. Type 2 subfamily. The cofactor is [4Fe-4S] cluster.

It is found in the cytoplasm. It catalyses the reaction iminosuccinate + dihydroxyacetone phosphate = quinolinate + phosphate + 2 H2O + H(+). The protein operates within cofactor biosynthesis; NAD(+) biosynthesis; quinolinate from iminoaspartate: step 1/1. Catalyzes the condensation of iminoaspartate with dihydroxyacetone phosphate to form quinolinate. The sequence is that of Quinolinate synthase from Caldicellulosiruptor saccharolyticus (strain ATCC 43494 / DSM 8903 / Tp8T 6331).